The sequence spans 323 residues: Quinolinate synthase (323 aa).

Iminosuccinate contacts are provided by histidine 39 and serine 56. Cysteine 101 contributes to the [4Fe-4S] cluster binding site. Iminosuccinate-binding positions include 127 to 129 and serine 144; that span reads YIN. Cysteine 187 is a [4Fe-4S] cluster binding site. Residues 213 to 215 and threonine 230 each bind iminosuccinate; that span reads HPE. Cysteine 280 lines the [4Fe-4S] cluster pocket.

The protein belongs to the quinolinate synthase family. Type 2 subfamily. Requires [4Fe-4S] cluster as cofactor.

The protein localises to the cytoplasm. It catalyses the reaction iminosuccinate + dihydroxyacetone phosphate = quinolinate + phosphate + 2 H2O + H(+). It functions in the pathway cofactor biosynthesis; NAD(+) biosynthesis; quinolinate from iminoaspartate: step 1/1. In terms of biological role, catalyzes the condensation of iminoaspartate with dihydroxyacetone phosphate to form quinolinate. This Chlorobium phaeobacteroides (strain DSM 266 / SMG 266 / 2430) protein is Quinolinate synthase.